The chain runs to 433 residues: UPF0761 membrane protein Sde_0901 (433 aa).

6 helical membrane passes run 46 to 66 (LFAM…FPAF), 103 to 123 (LSAA…TNIE), 142 to 162 (FLLY…GLAM), 185 to 205 (FFSY…FAAV), 217 to 237 (IGGI…GWVV), and 247 to 267 (GAFA…MIIL).

Belongs to the UPF0761 family.

Its subcellular location is the cell inner membrane. The protein is UPF0761 membrane protein Sde_0901 of Saccharophagus degradans (strain 2-40 / ATCC 43961 / DSM 17024).